We begin with the raw amino-acid sequence, 196 residues long: Anthranilate synthase component 2 (196 aa).

Residues 3–196 (VILIIDNYDS…RTVIRNFLRM (194 aa)) form the Glutamine amidotransferase type-1 domain. L-glutamine is bound at residue 60–62 (GPG). The active-site Nucleophile; for GATase activity is the C89. L-glutamine is bound by residues Q93 and 138–139 (SL). Catalysis depends on for GATase activity residues H177 and E179.

Heterotetramer consisting of two non-identical subunits: a beta subunit (TrpG) and a large alpha subunit (TrpE).

The enzyme catalyses chorismate + L-glutamine = anthranilate + pyruvate + L-glutamate + H(+). It functions in the pathway amino-acid biosynthesis; L-tryptophan biosynthesis; L-tryptophan from chorismate: step 1/5. Functionally, part of a heterotetrameric complex that catalyzes the two-step biosynthesis of anthranilate, an intermediate in the biosynthesis of L-tryptophan. In the first step, the glutamine-binding beta subunit (TrpG) of anthranilate synthase (AS) provides the glutamine amidotransferase activity which generates ammonia as a substrate that, along with chorismate, is used in the second step, catalyzed by the large alpha subunit of AS (TrpE) to produce anthranilate. In the absence of TrpG, TrpE can synthesize anthranilate directly from chorismate and high concentrations of ammonia. This is Anthranilate synthase component 2 (trpG) from Methanothermobacter thermautotrophicus (strain ATCC 29096 / DSM 1053 / JCM 10044 / NBRC 100330 / Delta H) (Methanobacterium thermoautotrophicum).